Consider the following 505-residue polypeptide: Ion-translocating oxidoreductase complex subunit C (505 aa).

4Fe-4S ferredoxin-type domains follow at residues 381–410 (ELNNFEEKNCIRCAACSYSCPMNLLPEQLY) and 420–449 (KTQIYNIQDCIECGICEQVCPSDIPLMSYY). [4Fe-4S] cluster contacts are provided by Cys390, Cys393, Cys396, Cys400, Cys429, Cys432, Cys435, and Cys439.

It belongs to the 4Fe4S bacterial-type ferredoxin family. RnfC subfamily. In terms of assembly, the complex is composed of six subunits: RnfA, RnfB, RnfC, RnfD, RnfE and RnfG. [4Fe-4S] cluster is required as a cofactor.

Its subcellular location is the cell inner membrane. Its function is as follows. Part of a membrane-bound complex that couples electron transfer with translocation of ions across the membrane. The polypeptide is Ion-translocating oxidoreductase complex subunit C (Buchnera aphidicola subsp. Baizongia pistaciae (strain Bp)).